A 145-amino-acid polypeptide reads, in one-letter code: Large ribosomal subunit protein uL13 (145 aa).

This sequence belongs to the universal ribosomal protein uL13 family. Part of the 50S ribosomal subunit.

In terms of biological role, this protein is one of the early assembly proteins of the 50S ribosomal subunit, although it is not seen to bind rRNA by itself. It is important during the early stages of 50S assembly. This is Large ribosomal subunit protein uL13 from Bacillus thuringiensis (strain Al Hakam).